A 150-amino-acid chain; its full sequence is Large ribosomal subunit protein bL9 (150 aa).

The protein belongs to the bacterial ribosomal protein bL9 family.

Its function is as follows. Binds to the 23S rRNA. The protein is Large ribosomal subunit protein bL9 of Pediococcus pentosaceus (strain ATCC 25745 / CCUG 21536 / LMG 10740 / 183-1w).